The sequence spans 295 residues: MDIPSVDVSTATNDGASSRAKGHRSAAPGRRKISDAVYQAELFRLQTEFVKLQEWARHSGARLVVIFEGRDGAGKGGAIKRITEYLNPRVARIAALPAPTDRERGQWYYQRYIAHLPAKGEIVLFDRSWYNRAGVEKVMGFCTPQEYVLFLRQTPIFEQMLIDDGILLRKYWFSVSDAEQLRRFKARRNDPVRQWKLSPMDLESVYRWEDYSRAKDEMMVHTDTPVSPWYVVESDIKKHARLNMMAHLLSTIDYADVEKPKVKLPPRPLVSGNYRRPPRELSTYVDDYVATLIAR.

The interval M1–P28 is disordered. The span at D7 to A16 shows a compositional bias: polar residues. Phosphohistidine is present on residues H115 and H247.

The protein belongs to the polyphosphate kinase 2 (PPK2) family. Class I subfamily. As to quaternary structure, interacts with Ndk. Post-translationally, autophosphorylated at His-115 and His-247 using polyP as a phosphate donor.

It carries out the reaction [phosphate](n) + GTP = [phosphate](n+1) + GDP. Its function is as follows. Uses inorganic polyphosphate (polyP) as a donor to convert GDP to GTP. In addition, modulates nucleotide triphosphate synthesis catalyzed by the nucleoside diphosphate kinase (Ndk) in favor of GTP production over CTP or UTP. Plays an important role in survival of M.tuberculosis in macrophages. This Mycobacterium tuberculosis (strain ATCC 25618 / H37Rv) protein is GDP-polyphosphate phosphotransferase.